Reading from the N-terminus, the 420-residue chain is Histidine--tRNA ligase (420 aa).

This sequence belongs to the class-II aminoacyl-tRNA synthetase family. In terms of assembly, homodimer.

The protein localises to the cytoplasm. It catalyses the reaction tRNA(His) + L-histidine + ATP = L-histidyl-tRNA(His) + AMP + diphosphate + H(+). In Staphylococcus aureus (strain Mu3 / ATCC 700698), this protein is Histidine--tRNA ligase.